Consider the following 259-residue polypeptide: Global transcriptional regulator CodY (259 aa).

A GAF domain region spans residues 1–155 (MDLLSRARKI…GATVVGMEIL (155 aa)). Residues 203–222 (ASKIADRVGITRSVIVNALR) constitute a DNA-binding region (H-T-H motif). At serine 215 the chain carries Phosphoserine.

The protein belongs to the CodY family.

The protein localises to the cytoplasm. Functionally, DNA-binding global transcriptional regulator which is involved in the adaptive response to starvation and acts by directly or indirectly controlling the expression of numerous genes in response to nutrient availability. During rapid exponential growth, CodY is highly active and represses genes whose products allow adaptation to nutrient depletion. The chain is Global transcriptional regulator CodY from Oceanobacillus iheyensis (strain DSM 14371 / CIP 107618 / JCM 11309 / KCTC 3954 / HTE831).